Here is a 315-residue protein sequence, read N- to C-terminus: Ankyrin repeat domain-containing protein EMB506, chloroplastic (315 aa).

A chloroplast-targeting transit peptide spans 1–39 (MVSSVLSIPPQTCLLPRLPISDSVNCKSKIVYCLSTSVR). A compositionally biased stretch (polar residues) spans 44-65 (KRQSTARTRSFTETNRRTPSVQ). The tract at residues 44–106 (KRQSTARTRS…DNESDWEDDS (63 aa)) is disordered. The span at 72 to 104 (EDPDDGSDSENEYEGEEEDGIGNDLDNESDWED) shows a compositional bias: acidic residues. 5 ANK repeats span residues 151–180 (KSWK…DIDD), 184–213 (DNQT…NPHL), 217–246 (DGAA…DVNV), 250–279 (EGWT…DKTR), and 283–307 (DGKL…VKLL).

In terms of assembly, interacts with AKR. No homodimerization observed. In terms of tissue distribution, expressed in roots, inflorescence stems, flowers, siliques, dry seeds and mature cauline leaves.

The protein resides in the plastid. Its subcellular location is the chloroplast. Its function is as follows. Involved in the initial differentiation of the proplastid during the embryo development. Also required for correct cotyledon, true leaf and cauline leaf margin development. This Arabidopsis thaliana (Mouse-ear cress) protein is Ankyrin repeat domain-containing protein EMB506, chloroplastic (EMB506).